The following is a 426-amino-acid chain: Histidine--tRNA ligase (426 aa).

The protein belongs to the class-II aminoacyl-tRNA synthetase family. As to quaternary structure, homodimer.

The protein localises to the cytoplasm. It catalyses the reaction tRNA(His) + L-histidine + ATP = L-histidyl-tRNA(His) + AMP + diphosphate + H(+). In Pseudoalteromonas translucida (strain TAC 125), this protein is Histidine--tRNA ligase.